A 409-amino-acid chain; its full sequence is Argininosuccinate synthase (409 aa).

Residues 13 to 21 (AYSGGLDTS) and A40 contribute to the ATP site. L-citrulline-binding residues include Y91 and S96. G121 contributes to the ATP binding site. L-aspartate contacts are provided by T123, N127, and D128. An L-citrulline-binding site is contributed by N127. The L-citrulline site is built by R131, S183, S192, E268, and Y280.

It belongs to the argininosuccinate synthase family. Type 1 subfamily. In terms of assembly, homotetramer.

It is found in the cytoplasm. The enzyme catalyses L-citrulline + L-aspartate + ATP = 2-(N(omega)-L-arginino)succinate + AMP + diphosphate + H(+). The protein operates within amino-acid biosynthesis; L-arginine biosynthesis; L-arginine from L-ornithine and carbamoyl phosphate: step 2/3. This Saccharophagus degradans (strain 2-40 / ATCC 43961 / DSM 17024) protein is Argininosuccinate synthase.